Consider the following 305-residue polypeptide: MASRKENAKSANRVLRISQLDALELNKALEQLVWSQFTQCFHGFKPGLLARFEPEVKACLWVFLWRFTIYSKNATVGQSVLNIKYKNDFSPNLRYQPPSKNQKIWYAVCTIGGRWLEERCYDLFRNHHLASFGKVKQCVNFVIGLLKLGGLINFLIFLQRGKFATLTERLLGIHSVFCKPQNICEVGFEYMNRELLWHGFAEFLIFLLPLINVQKLKAKLSSWCIPLTGAPNSDNTLATSGKECALCGEWPTMPHTIGCEHIFCYFCAKSSFLFDVYFTCPKCGTEVHSLQPLKSGIEMSEVNAL.

The Peroxisomal matrix segment spans residues 1 to 15; it reads MASRKENAKSANRVL. Residues 16–42 form a helical membrane-spanning segment; that stretch reads RISQLDALELNKALEQLVWSQFTQCFH. Over 43-48 the chain is Cytoplasmic; that stretch reads GFKPGL. A helical transmembrane segment spans residues 49 to 74; it reads LARFEPEVKACLWVFLWRFTIYSKNA. Topologically, residues 75-98 are peroxisomal matrix; it reads TVGQSVLNIKYKNDFSPNLRYQPP. An N6-acetyllysine modification is found at Lys-84. The chain crosses the membrane as a helical span at residues 99–125; it reads SKNQKIWYAVCTIGGRWLEERCYDLFR. Over 126–133 the chain is Cytoplasmic; it reads NHHLASFG. A helical membrane pass occupies residues 134–160; it reads KVKQCVNFVIGLLKLGGLINFLIFLQR. Residues 161–187 are Peroxisomal matrix-facing; it reads GKFATLTERLLGIHSVFCKPQNICEVG. Residues 188-211 traverse the membrane as a helical segment; it reads FEYMNRELLWHGFAEFLIFLLPLI. Topologically, residues 212–305 are cytoplasmic; the sequence is NVQKLKAKLS…GIEMSEVNAL (94 aa). Zn(2+) is bound by residues Cys-244, Cys-247, Cys-259, His-261, Cys-264, Cys-267, Cys-280, and Cys-283. The RING-type zinc finger occupies 244-284; the sequence is CALCGEWPTMPHTIGCEHIFCYFCAKSSFLFDVYFTCPKCG.

It belongs to the pex2/pex10/pex12 family. As to quaternary structure, component of the PEX2-PEX10-PEX12 retrotranslocation channel, composed of PEX2, PEX10 and PEX12. Forms intramolecular and intermolecular disulfide bonds in response to reactive oxygen species (ROS), promoting higher stability.

The protein resides in the peroxisome membrane. The enzyme catalyses [E2 ubiquitin-conjugating enzyme]-S-ubiquitinyl-L-cysteine + [acceptor protein]-L-cysteine = [E2 ubiquitin-conjugating enzyme]-L-cysteine + [acceptor protein]-S-ubiquitinyl-L-cysteine.. It catalyses the reaction S-ubiquitinyl-[E2 ubiquitin-conjugating enzyme]-L-cysteine + [acceptor protein]-L-lysine = [E2 ubiquitin-conjugating enzyme]-L-cysteine + N(6)-ubiquitinyl-[acceptor protein]-L-lysine.. It functions in the pathway protein modification; protein ubiquitination. E3 ubiquitin-protein ligase component of a retrotranslocation channel required for peroxisome organization by mediating export of the PEX5 receptor from peroxisomes to the cytosol, thereby promoting PEX5 recycling. The retrotranslocation channel is composed of PEX2, PEX10 and PEX12; each subunit contributing transmembrane segments that coassemble into an open channel that specifically allows the passage of PEX5 through the peroxisomal membrane. PEX2 also regulates peroxisome organization by acting as a E3 ubiquitin-protein ligase. PEX2 ubiquitinates PEX5 during its passage through the retrotranslocation channel: catalyzes monoubiquitination of PEX5 at 'Cys-11', a modification that acts as a signal for PEX5 extraction into the cytosol. Required for pexophagy in response to starvation by mediating ubiquitination of peroxisomal proteins, such as PEX5 and ABCD3/PMP70. Also involved in the response to reactive oxygen species (ROS) by mediating 'Lys-48'-linked polyubiquitination and subsequent degradation of PNPLA2/ATGL, thereby regulating lipolysis. This chain is Peroxisome biogenesis factor 2, found in Homo sapiens (Human).